The chain runs to 404 residues: NADH-quinone oxidoreductase subunit D 2 (404 aa).

This sequence belongs to the complex I 49 kDa subunit family. In terms of assembly, NDH-1 is composed of 14 different subunits. Subunits NuoB, C, D, E, F, and G constitute the peripheral sector of the complex.

It localises to the cell inner membrane. It carries out the reaction a quinone + NADH + 5 H(+)(in) = a quinol + NAD(+) + 4 H(+)(out). In terms of biological role, NDH-1 shuttles electrons from NADH, via FMN and iron-sulfur (Fe-S) centers, to quinones in the respiratory chain. The immediate electron acceptor for the enzyme in this species is believed to be ubiquinone. Couples the redox reaction to proton translocation (for every two electrons transferred, four hydrogen ions are translocated across the cytoplasmic membrane), and thus conserves the redox energy in a proton gradient. The sequence is that of NADH-quinone oxidoreductase subunit D 2 from Rhizobium etli (strain CIAT 652).